Here is an 883-residue protein sequence, read N- to C-terminus: Valine--tRNA ligase (883 aa).

The short motif at 46 to 56 (PNVTGKLHLGH) is the 'HIGH' region element. Residues 520 to 524 (KMSKS) carry the 'KMSKS' region motif. Position 523 (K523) interacts with ATP. A coiled-coil region spans residues 809–883 (LADLLNVEEE…RIKEMEKLIK (75 aa)).

This sequence belongs to the class-I aminoacyl-tRNA synthetase family. ValS type 1 subfamily. In terms of assembly, monomer.

It localises to the cytoplasm. It carries out the reaction tRNA(Val) + L-valine + ATP = L-valyl-tRNA(Val) + AMP + diphosphate. In terms of biological role, catalyzes the attachment of valine to tRNA(Val). As ValRS can inadvertently accommodate and process structurally similar amino acids such as threonine, to avoid such errors, it has a 'posttransfer' editing activity that hydrolyzes mischarged Thr-tRNA(Val) in a tRNA-dependent manner. The chain is Valine--tRNA ligase from Streptococcus mutans serotype c (strain ATCC 700610 / UA159).